Reading from the N-terminus, the 334-residue chain is Ornithine carbamoyltransferase (334 aa).

Residues 57 to 60, Q84, R108, and 135 to 138 contribute to the carbamoyl phosphate site; these read STRT and HPTQ. Residues N168, D232, and 236–237 contribute to the L-ornithine site; that span reads SM. Carbamoyl phosphate contacts are provided by residues 274-275 and R321; that span reads CL.

Belongs to the aspartate/ornithine carbamoyltransferase superfamily. OTCase family.

The protein localises to the cytoplasm. It catalyses the reaction carbamoyl phosphate + L-ornithine = L-citrulline + phosphate + H(+). It functions in the pathway amino-acid biosynthesis; L-arginine biosynthesis; L-arginine from L-ornithine and carbamoyl phosphate: step 1/3. Its function is as follows. Reversibly catalyzes the transfer of the carbamoyl group from carbamoyl phosphate (CP) to the N(epsilon) atom of ornithine (ORN) to produce L-citrulline. This Actinobacillus pleuropneumoniae serotype 5b (strain L20) protein is Ornithine carbamoyltransferase.